Consider the following 628-residue polypeptide: Chaperone protein HtpG (628 aa).

The a; substrate-binding stretch occupies residues 1–334 (MTTIDTASET…SEDLPLNLSR (334 aa)). The tract at residues 335 to 550 (EMLQNNPQLA…GFGPDRELEK (216 aa)) is b. A c region spans residues 551–628 (MLARANKGAA…LVLRGVVAHG (78 aa)).

It belongs to the heat shock protein 90 family. As to quaternary structure, homodimer.

The protein resides in the cytoplasm. Functionally, molecular chaperone. Has ATPase activity. The sequence is that of Chaperone protein HtpG from Rhodopseudomonas palustris (strain HaA2).